We begin with the raw amino-acid sequence, 270 residues long: Bis(5'-nucleosyl)-tetraphosphatase, symmetrical (270 aa).

The protein belongs to the Ap4A hydrolase family.

The catalysed reaction is P(1),P(4)-bis(5'-adenosyl) tetraphosphate + H2O = 2 ADP + 2 H(+). In terms of biological role, hydrolyzes diadenosine 5',5'''-P1,P4-tetraphosphate to yield ADP. This chain is Bis(5'-nucleosyl)-tetraphosphatase, symmetrical, found in Cellvibrio japonicus (strain Ueda107) (Pseudomonas fluorescens subsp. cellulosa).